We begin with the raw amino-acid sequence, 447 residues long: Oxysterols receptor LXR-alpha (447 aa).

Disordered stretches follow at residues 1 to 37 and 65 to 88; these read MSLW…GGSS and ALLT…KKGP. The tract at residues 1-96 is transactivation AF-1; required for ligand-independent transactivation function; the sequence is MSLWLGAPVP…GPAPKMLGNE (96 aa). The span at 24–37 shows a compositional bias: low complexity; sequence GAQDASSQAQGGSS. Positions 95–170 form a DNA-binding region, nuclear receptor; the sequence is NELCSVCGDK…AGMREECVLS (76 aa). NR C4-type zinc fingers lie at residues 98 to 118 and 134 to 158; these read CSVC…CEGC and CHSG…LRKC. The segment at 180–202 is disordered; sequence KRQEEEQAHATSLPPRASSPPQI. The transactivation AF-2; required for ligand-dependent transactivation function; mediates interaction with CCAR2 stretch occupies residues 205–447; sequence QLSPEQLGMI…LLSEIWDVHE (243 aa). Residues 209 to 447 form the NR LBD domain; that stretch reads EQLGMIEKLV…LLSEIWDVHE (239 aa).

This sequence belongs to the nuclear hormone receptor family. NR1 subfamily. As to quaternary structure, heterodimer of NR1H3 and RXR (retinoic acid receptor). Interacts with CCAR2 (via N-terminus) in a ligand-independent manner. Interacts with SIRT1 and this interaction is inhibited by CCAR2. Interacts with GPS2. Post-translationally, ubiquitinated by UBR5, leading to its degradation: UBR5 specifically recognizes and binds ligand-bound NR1H3 when it is not associated with coactivators (NCOAs). In presence of NCOAs, the UBR5-degron is not accessible, preventing its ubiquitination and degradation. As to expression, visceral organs specific expression. Strong expression was found in liver, kidney and intestine followed by spleen and to a lesser extent the adrenals.

It localises to the nucleus. It is found in the cytoplasm. Nuclear receptor that exhibits a ligand-dependent transcriptional activation activity. Interaction with retinoic acid receptor (RXR) shifts RXR from its role as a silent DNA-binding partner to an active ligand-binding subunit in mediating retinoid responses through target genes defined by LXRES. LXRES are DR4-type response elements characterized by direct repeats of two similar hexanuclotide half-sites spaced by four nucleotides. Plays an important role in the regulation of cholesterol homeostasis, regulating cholesterol uptake through MYLIP-dependent ubiquitination of LDLR, VLDLR and LRP8. Interplays functionally with RORA for the regulation of genes involved in liver metabolism. Induces LPCAT3-dependent phospholipid remodeling in endoplasmic reticulum (ER) membranes of hepatocytes, driving SREBF1 processing and lipogenesis. Via LPCAT3, triggers the incorporation of arachidonate into phosphatidylcholines of ER membranes, increasing membrane dynamics and enabling triacylglycerols transfer to nascent very low-density lipoprotein (VLDL) particles. Via LPCAT3 also counteracts lipid-induced ER stress response and inflammation, likely by modulating SRC kinase membrane compartmentalization and limiting the synthesis of lipid inflammatory mediators. This chain is Oxysterols receptor LXR-alpha (NR1H3), found in Homo sapiens (Human).